The primary structure comprises 446 residues: Eukaryotic translation initiation factor 2 subunit gamma (446 aa).

Residues 21–227 (QATINIGTIG…YIVKKIPIPV (207 aa)) form the tr-type G domain. The interval 30–37 (GHVAHGKS) is G1. Residue 33-38 (AHGKST) participates in GTP binding. The segment at 58 to 62 (NITIK) is G2. The tract at residues 114 to 117 (DCPG) is G3. Residues 170–173 (NKVD) and 205–207 (SAQ) each bind GTP. The tract at residues 170-173 (NKVD) is G4. A G5 region spans residues 205–207 (SAQ). An interacts with cdc123 region spans residues 436–446 (AKVVEGKTLKV).

This sequence belongs to the TRAFAC class translation factor GTPase superfamily. Classic translation factor GTPase family. EIF2G subfamily. In terms of assembly, eukaryotic translation initiation factor 2 eIF2 is a heterotrimeric complex composed of an alpha, a beta and a gamma subunit. The factors eIF-1, eIF-2, eIF-3, TIF5/eIF-5 and methionyl-tRNAi form a multifactor complex (MFC) that may bind to the 40S ribosome. Interacts with cdc123; the interaction is direct.

Its subcellular location is the cytoplasm. The protein localises to the cytosol. It catalyses the reaction GTP + H2O = GDP + phosphate + H(+). Functionally, as a subunit of eukaryotic initiation factor 2 eIF2, involved in the early steps of protein synthesis. In the presence of GTP, eIF-2 forms a ternary complex with initiator tRNA Met-tRNAi and then recruits the 40S ribosomal complex and initiation factors eIF-1, eIF-1A and eIF-3 to form the 43S pre-initiation complex (43S PIC), a step that determines the rate of protein translation. The 43S PIC binds to mRNA and scans downstream to the initiation codon, where it forms a 48S initiation complex by codon-anticodon base pairing. This leads to the displacement of eIF-1 to allow GTPase-activating protein (GAP) eIF-5-mediated hydrolysis of eIF2-bound GTP. Hydrolysis of GTP and release of Pi, which makes GTP hydrolysis irreversible, causes the release of the eIF-2-GDP binary complex from the 40S subunit, an event that is essential for the subsequent joining of the 60S ribosomal subunit to form an elongation-competent 80S ribosome. In order for eIF-2 to recycle and catalyze another round of initiation, the GDP bound to eIF-2 must be exchanged with GTP by way of a reaction catalyzed by GDP-GTP exchange factor (GEF) eIF-2B. This chain is Eukaryotic translation initiation factor 2 subunit gamma (tif213), found in Schizosaccharomyces pombe (strain 972 / ATCC 24843) (Fission yeast).